The sequence spans 607 residues: DNA mismatch repair protein MutL (607 aa).

It belongs to the DNA mismatch repair MutL/HexB family.

Functionally, this protein is involved in the repair of mismatches in DNA. It is required for dam-dependent methyl-directed DNA mismatch repair. May act as a 'molecular matchmaker', a protein that promotes the formation of a stable complex between two or more DNA-binding proteins in an ATP-dependent manner without itself being part of a final effector complex. The protein is DNA mismatch repair protein MutL of Gemmatimonas aurantiaca (strain DSM 14586 / JCM 11422 / NBRC 100505 / T-27).